Here is a 569-residue protein sequence, read N- to C-terminus: Spermatogenesis-associated protein 16 (569 aa).

A compositionally biased stretch (basic and acidic residues) spans 67–92; that stretch reads KGIKEKQSNDLEKAAFKRKAEGEEKP. The tract at residues 67 to 96 is disordered; sequence KGIKEKQSNDLEKAAFKRKAEGEEKPTRKK.

It belongs to the SPATA16 family. In terms of tissue distribution, expressed in testis.

It is found in the golgi apparatus. The protein localises to the cytoplasmic vesicle. It localises to the secretory vesicle. The protein resides in the acrosome. Essential for spermiogenesis and male fertility. Involved in the formation of sperm acrosome during spermatogenesis. This chain is Spermatogenesis-associated protein 16 (SPATA16), found in Homo sapiens (Human).